The primary structure comprises 421 residues: Probable sugar-binding periplasmic protein (421 aa).

Positions 1 to 27 are cleaved as a signal peptide; sequence MHKLLKLAAMGTAACALLAGMAPVANA.

It belongs to the bacterial solute-binding protein 1 family.

The protein localises to the periplasm. In terms of biological role, part of a binding-protein-dependent transport system for a sugar. The polypeptide is Probable sugar-binding periplasmic protein (Brucella melitensis biotype 1 (strain ATCC 23456 / CCUG 17765 / NCTC 10094 / 16M)).